A 1047-amino-acid polypeptide reads, in one-letter code: Ribonucleoside-diphosphate reductase subunit alpha (1047 aa).

ATP-cone domains are found at residues cysteine 9 to arginine 111, leucine 118 to arginine 219, and valine 237 to glycine 327. Residues threonine 442, serine 457 to cysteine 458, glycine 486, asparagine 670 to glutamate 674, and proline 857 to isoleucine 861 each bind substrate. A disulfide bond links cysteine 458 and cysteine 687. Asparagine 670 serves as the catalytic Proton acceptor. Cysteine 672 functions as the Cysteine radical intermediate in the catalytic mechanism. The active-site Proton acceptor is the glutamate 674.

The protein belongs to the ribonucleoside diphosphate reductase large chain family. In terms of assembly, tetramer of two alpha and two beta subunits.

It catalyses the reaction a 2'-deoxyribonucleoside 5'-diphosphate + [thioredoxin]-disulfide + H2O = a ribonucleoside 5'-diphosphate + [thioredoxin]-dithiol. Its activity is regulated as follows. Under complex allosteric control mediated by deoxynucleoside triphosphates and ATP binding. The type of nucleotide bound at the specificity site determines substrate preference. It seems probable that ATP makes the enzyme reduce CDP and UDP, dGTP favors ADP reduction and dTTP favors GDP reduction. Provides the precursors necessary for DNA synthesis. Catalyzes the biosynthesis of deoxyribonucleotides from the corresponding ribonucleotides. This is Ribonucleoside-diphosphate reductase subunit alpha (nrdA) from Chlamydia trachomatis serovar D (strain ATCC VR-885 / DSM 19411 / UW-3/Cx).